A 195-amino-acid polypeptide reads, in one-letter code: COMM domain-containing protein 3 (195 aa).

The COMM domain occupies 124-193; that stretch reads HITDVSWRLE…DASKSLERAT (70 aa).

Belongs to the COMM domain-containing protein 3 family. In terms of assembly, component of the commander complex consisting of the CCC subcomplex and the retriever subcomplex. Component of the CCC (COMMD/CCDC22/CCDC93) subcomplex consisting of COMMD1, COMMD2, COMMD3, COMMD4, COMMD5, COMMD6, COMMD7, COMMD8, COMMD9, COMMD10, CCDC22 and CCDC93; within the complex forms a heterodimer with COMMD2. Interacts with NFKB1/p105. Interacts with CCDC22, CCDC93, SCNN1B, CUL3, CUL4A, CUL4B, CUL5. In terms of tissue distribution, widely expressed with highest expression in thymus.

It is found in the cytoplasm. The protein resides in the nucleus. Scaffold protein in the commander complex that is essential for endosomal recycling of transmembrane cargos; the commander complex is composed of the CCC subcomplex and the retriever subcomplex. May modulate activity of cullin-RING E3 ubiquitin ligase (CRL) complexes. May down-regulate activation of NF-kappa-B. Modulates Na(+) transport in epithelial cells by regulation of apical cell surface expression of amiloride-sensitive sodium channel (ENaC) subunits. This is COMM domain-containing protein 3 (COMMD3) from Homo sapiens (Human).